A 24-amino-acid chain; its full sequence is Humanin-like 6 (24 aa).

Belongs to the humanin family. As to expression, expressed in skeletal muscle and testis.

The protein resides in the secreted. The protein localises to the cytoplasm. Functionally, plays a role as a neuroprotective and antiapoptotic factor. The protein is Humanin-like 6 of Homo sapiens (Human).